A 238-amino-acid polypeptide reads, in one-letter code: tRNA (guanine-N(7)-)-methyltransferase (238 aa).

Residues glutamate 68, glutamate 93, aspartate 120, and aspartate 143 each coordinate S-adenosyl-L-methionine. Aspartate 143 is an active-site residue. Substrate is bound by residues lysine 147, aspartate 179, and 216-219 (TKFE).

The protein belongs to the class I-like SAM-binding methyltransferase superfamily. TrmB family.

The catalysed reaction is guanosine(46) in tRNA + S-adenosyl-L-methionine = N(7)-methylguanosine(46) in tRNA + S-adenosyl-L-homocysteine. Its pathway is tRNA modification; N(7)-methylguanine-tRNA biosynthesis. Catalyzes the formation of N(7)-methylguanine at position 46 (m7G46) in tRNA. This is tRNA (guanine-N(7)-)-methyltransferase from Shewanella baltica (strain OS195).